The primary structure comprises 208 residues: Protein GrpE (208 aa).

Residues 1-25 show a composition bias toward basic and acidic residues; that stretch reads MVDNKDFNEELKESIQEELDNETKS. A disordered region spans residues 1 to 38; the sequence is MVDNKDFNEELKESIQEELDNETKSENPNIDEEVEEVS. Over residues 29-38 the composition is skewed to acidic residues; that stretch reads NIDEEVEEVS.

It belongs to the GrpE family. Homodimer.

The protein localises to the cytoplasm. Participates actively in the response to hyperosmotic and heat shock by preventing the aggregation of stress-denatured proteins, in association with DnaK and GrpE. It is the nucleotide exchange factor for DnaK and may function as a thermosensor. Unfolded proteins bind initially to DnaJ; upon interaction with the DnaJ-bound protein, DnaK hydrolyzes its bound ATP, resulting in the formation of a stable complex. GrpE releases ADP from DnaK; ATP binding to DnaK triggers the release of the substrate protein, thus completing the reaction cycle. Several rounds of ATP-dependent interactions between DnaJ, DnaK and GrpE are required for fully efficient folding. This is Protein GrpE from Clostridium perfringens (strain SM101 / Type A).